The sequence spans 98 residues: Large ribosomal subunit protein bL25 (98 aa).

The segment at 1 to 22 (MANFVLNATARNEDKQGKGASR) is disordered.

This sequence belongs to the bacterial ribosomal protein bL25 family. Part of the 50S ribosomal subunit; part of the 5S rRNA/L5/L18/L25 subcomplex. Contacts the 5S rRNA. Binds to the 5S rRNA independently of L5 and L18.

This is one of the proteins that binds to the 5S RNA in the ribosome where it forms part of the central protuberance. The chain is Large ribosomal subunit protein bL25 from Acinetobacter baylyi (strain ATCC 33305 / BD413 / ADP1).